The following is a 75-amino-acid chain: Small ribosomal subunit protein bS18 (75 aa).

The protein belongs to the bacterial ribosomal protein bS18 family. As to quaternary structure, part of the 30S ribosomal subunit. Forms a tight heterodimer with protein bS6.

Its function is as follows. Binds as a heterodimer with protein bS6 to the central domain of the 16S rRNA, where it helps stabilize the platform of the 30S subunit. The chain is Small ribosomal subunit protein bS18 from Photobacterium profundum (strain SS9).